Here is a 71-residue protein sequence, read N- to C-terminus: Conotoxin LvVIIB (71 aa).

An N-terminal signal peptide occupies residues 1-17; sequence VLIIAVLFLAASELVTA. Positions 18-42 are excised as a propeptide; the sequence is DYTRDEWQYRAASLRDAMRNFRDTR. Cystine bridges form between C43–C57, C50–C62, and C56–C69.

The protein belongs to the conotoxin O1 superfamily. As to expression, expressed by the venom duct.

The protein resides in the secreted. The chain is Conotoxin LvVIIB from Conus lividus (Livid cone).